The chain runs to 85 residues: Toxin BmKaTX15 (85 aa).

A signal peptide spans 1 to 19; the sequence is MNYLVFFSLALLVMTGVES. Positions 21 to 83 constitute an LCN-type CS-alpha/beta domain; sequence RDGYIADDKN…VPIRVPGKCN (63 aa). Disulfide bonds link Cys-31-Cys-82, Cys-35-Cys-55, Cys-41-Cys-65, and Cys-45-Cys-67.

The protein belongs to the long (4 C-C) scorpion toxin superfamily. Sodium channel inhibitor family. Alpha subfamily. As to expression, expressed by the venom gland.

The protein resides in the secreted. In terms of biological role, alpha toxins bind voltage-independently at site-3 of sodium channels (Nav) and inhibit the inactivation of the activated channels, thereby blocking neuronal transmission. This is Toxin BmKaTX15 from Olivierus martensii (Manchurian scorpion).